Consider the following 562-residue polypeptide: NAD-dependent malic enzyme (562 aa).

The active-site Proton donor is Tyr-101. Residue Arg-154 coordinates NAD(+). The active-site Proton acceptor is Lys-172. A divalent metal cation-binding residues include Glu-243, Asp-244, and Asp-267. NAD(+) is bound by residues Asp-267 and Asn-415.

This sequence belongs to the malic enzymes family. In terms of assembly, homotetramer. Mg(2+) is required as a cofactor. The cofactor is Mn(2+).

The catalysed reaction is (S)-malate + NAD(+) = pyruvate + CO2 + NADH. It carries out the reaction oxaloacetate + H(+) = pyruvate + CO2. The polypeptide is NAD-dependent malic enzyme (Shewanella halifaxensis (strain HAW-EB4)).